Here is a 317-residue protein sequence, read N- to C-terminus: Transaldolase (317 aa).

Lysine 125 acts as the Schiff-base intermediate with substrate in catalysis.

Belongs to the transaldolase family. Type 1 subfamily. Homodimer.

The protein localises to the cytoplasm. The enzyme catalyses D-sedoheptulose 7-phosphate + D-glyceraldehyde 3-phosphate = D-erythrose 4-phosphate + beta-D-fructose 6-phosphate. Its pathway is carbohydrate degradation; pentose phosphate pathway; D-glyceraldehyde 3-phosphate and beta-D-fructose 6-phosphate from D-ribose 5-phosphate and D-xylulose 5-phosphate (non-oxidative stage): step 2/3. Transaldolase is important for the balance of metabolites in the pentose-phosphate pathway. The protein is Transaldolase of Delftia acidovorans (strain DSM 14801 / SPH-1).